We begin with the raw amino-acid sequence, 91 residues long: Protein LURE 1.6 (91 aa).

The N-terminal stretch at 1–20 (MKLPFIFLITLLIFVSSCTS) is a signal peptide. 3 disulfides stabilise this stretch: C59-C76, C62-C83, and C66-C85.

Belongs to the DEFL family. Expressed in the pistil. Detected in the synergid cells.

The protein resides in the secreted. In terms of biological role, pollen tube attractants guiding pollen tubes to the ovular micropyle. This chain is Protein LURE 1.6, found in Arabidopsis thaliana (Mouse-ear cress).